Here is a 332-residue protein sequence, read N- to C-terminus: Super small secreted glycoprotein (332 aa).

Positions 1 to 33 (MGSGYQLLQLPRERFRKTSFLVWVIILFQRAIS) are cleaved as a signal peptide. N41 carries N-linked (GlcNAc...) asparagine; by host glycosylation. 2 disulfides stabilise this stretch: C109–C136 and C122–C148. Residues N205, N229, N239, N258, and N269 are each glycosylated (N-linked (GlcNAc...) asparagine; by host).

The protein belongs to the filoviruses glycoprotein family.

It localises to the secreted. In Reston ebolavirus (strain Reston-89) (REBOV), this protein is Super small secreted glycoprotein (GP).